Here is a 101-residue protein sequence, read N- to C-terminus: ATP-dependent Clp protease adapter protein ClpS (101 aa).

The protein belongs to the ClpS family. Binds to the N-terminal domain of the chaperone ClpA.

Its function is as follows. Involved in the modulation of the specificity of the ClpAP-mediated ATP-dependent protein degradation. This chain is ATP-dependent Clp protease adapter protein ClpS, found in Treponema denticola (strain ATCC 35405 / DSM 14222 / CIP 103919 / JCM 8153 / KCTC 15104).